The following is a 568-amino-acid chain: Urease subunit alpha (568 aa).

The Urease domain maps to 131 to 568; that stretch reads GGMDAHIHFI…LPLAQRYFLY (438 aa). Residues His136, His138, and Lys219 each contribute to the Ni(2+) site. The residue at position 219 (Lys219) is an N6-carboxylysine. Position 221 (His221) interacts with substrate. His248 and His274 together coordinate Ni(2+). Residue His322 is the Proton donor of the active site. Residue Asp362 coordinates Ni(2+).

It belongs to the metallo-dependent hydrolases superfamily. Urease alpha subunit family. In terms of assembly, heterotrimer of UreA (gamma), UreB (beta) and UreC (alpha) subunits. Three heterotrimers associate to form the active enzyme. Ni cation serves as cofactor. Post-translationally, carboxylation allows a single lysine to coordinate two nickel ions.

The protein localises to the cytoplasm. It carries out the reaction urea + 2 H2O + H(+) = hydrogencarbonate + 2 NH4(+). Its pathway is nitrogen metabolism; urea degradation; CO(2) and NH(3) from urea (urease route): step 1/1. This is Urease subunit alpha from Cereibacter sphaeroides (strain ATCC 17025 / ATH 2.4.3) (Rhodobacter sphaeroides).